A 139-amino-acid chain; its full sequence is Acidic phospholipase A2 DE-I (139 aa).

Residues 1-16 (MRTLWIMAVLLLGVEG) form the signal peptide. 7 disulfide bridges follow: Cys-42–Cys-132, Cys-44–Cys-60, Cys-59–Cys-111, Cys-65–Cys-139, Cys-66–Cys-104, Cys-73–Cys-97, and Cys-91–Cys-102. Positions 43, 45, and 47 each coordinate Ca(2+). The active site involves His-63. Residue Asp-64 participates in Ca(2+) binding. Asp-105 is an active-site residue.

Requires Ca(2+) as cofactor. In terms of tissue distribution, expressed by the venom gland.

It is found in the secreted. It catalyses the reaction a 1,2-diacyl-sn-glycero-3-phosphocholine + H2O = a 1-acyl-sn-glycero-3-phosphocholine + a fatty acid + H(+). In terms of biological role, snake venom phospholipase A2 (PLA2) that inhibits the ADP- and collagen-induced human platelet aggregation. Exhibits high hydrolytic activities and preferred the anionic micelles to the zwitterionic micelles. PLA2 catalyzes the calcium-dependent hydrolysis of the 2-acyl groups in 3-sn-phosphoglycerides. The polypeptide is Acidic phospholipase A2 DE-I (Ovophis okinavensis (Ryukyu Island pit viper)).